Consider the following 249-residue polypeptide: Basic leucine zipper 23 (249 aa).

The disordered stretch occupies residues lysine 66–lysine 90. In terms of domain architecture, bZIP spans glutamate 74–glutamine 121. The interval lysine 78 to lysine 98 is basic motif. The tract at residues leucine 102–leucine 116 is leucine-zipper.

The protein localises to the nucleus. Functionally, transcription factor involved in the response to zinc ion deficiency. Binds to the consensus sequence 5'-[AG]TGTCGACA[CT]-3' also called zinc deficiency response element (ZDRE). The ZDRE sequence is conserved in the plant kingdom and present in the promoters of genes that constitute the primary response to zinc deficiency, comprising additional ZIP metal transporter genes. Required for zinc accumulation in roots. Mediates the expression of the zinc transporter ZIP12 during growth in zinc-deficient conditions. ZIP12 transporter is involved in zinc uptake in roots. This is Basic leucine zipper 23 from Arabidopsis thaliana (Mouse-ear cress).